We begin with the raw amino-acid sequence, 193 residues long: Ras-like protein 2 (193 aa).

Position 12 to 19 (G12 to S19) interacts with GTP. The Effector region motif lies at Y34–Y42. GTP contacts are provided by residues D59 to Q63 and N118 to D121. C190 bears the Cysteine methyl ester mark. The S-geranylgeranyl cysteine moiety is linked to residue C190. Positions K191–L193 are cleaved as a propeptide — removed in mature form.

It belongs to the small GTPase superfamily. Ras family.

It localises to the cell membrane. The catalysed reaction is GTP + H2O = GDP + phosphate + H(+). Its function is as follows. Ras proteins bind GDP/GTP and possess intrinsic GTPase activity. This Physarum polycephalum (Slime mold) protein is Ras-like protein 2 (RAS-2).